The sequence spans 276 residues: MRLVILDNYDLASEWAAKYICNRIIQFKPGQDRYFTLGLPTGSTPLGCYKKLIEYHKNGHLSFKYVKTFNMDEYVGLPRNHPESYHSYMWNNFFKHIDIDPNNAHILDGNAADLQAECDAFENKIKEAGGIDLFVGGIGPDGHIAFNEPGSSLVSRTRLKTLAMDTILANAKYFDGDLSKVPTMALTVGVGTVMDAREVMILITGAHKAFALYKAIEEGVNHMWTVSAFQQHPRTIFVCDEDATLELRVKTVKYFKGLMHVHNKLVDPLFSMKDGN.

D72 serves as the catalytic Proton acceptor; for enolization step. A coiled-coil region spans residues 105-130; the sequence is HILDGNAADLQAECDAFENKIKEAGG. D141 functions as the For ring-opening step in the catalytic mechanism. H143 (proton acceptor; for ring-opening step) is an active-site residue. E148 (for ring-opening step) is an active-site residue. T161 is subject to Phosphothreonine.

It belongs to the glucosamine/galactosamine-6-phosphate isomerase family. As to quaternary structure, homohexamer. In terms of tissue distribution, ubiquitous, with highest expression detected in testis, ovary, placenta, and heart.

It localises to the cytoplasm. It catalyses the reaction alpha-D-glucosamine 6-phosphate + H2O = beta-D-fructose 6-phosphate + NH4(+). It functions in the pathway nucleotide-sugar biosynthesis; UDP-N-acetyl-alpha-D-glucosamine biosynthesis; alpha-D-glucosamine 6-phosphate from D-fructose 6-phosphate: step 1/1. With respect to regulation, allosterically activated by N-acetylglucosamine-6-phosphate (GlcNAc6P). Functionally, catalyzes the reversible conversion of alpha-D-glucosamine 6-phosphate (GlcN-6P) into beta-D-fructose 6-phosphate (Fru-6P) and ammonium ion, a regulatory reaction step in de novo uridine diphosphate-N-acetyl-alpha-D-glucosamine (UDP-GlcNAc) biosynthesis via hexosamine pathway. Deamination is coupled to aldo-keto isomerization mediating the metabolic flux from UDP-GlcNAc toward Fru-6P. At high ammonium level can drive amination and isomerization of Fru-6P toward hexosamines and UDP-GlcNAc synthesis. Has a role in fine tuning the metabolic fluctuations of cytosolic UDP-GlcNAc and their effects on hyaluronan synthesis that occur during tissue remodeling. In Homo sapiens (Human), this protein is Glucosamine-6-phosphate deaminase 2.